The following is a 227-amino-acid chain: Small ribosomal subunit protein uS5 (227 aa).

A disordered region spans residues 1–22; the sequence is MSKRSNRSNNKNNTNKFNIENW. Residues 7-18 show a composition bias toward low complexity; sequence RSNNKNNTNKFN. The 64-residue stretch at 63–126 folds into the S5 DRBM domain; it reads LEEEVMDVNL…DAAKYNLIKV (64 aa).

This sequence belongs to the universal ribosomal protein uS5 family. As to quaternary structure, part of the 30S ribosomal subunit. Contacts protein S4.

In terms of biological role, with S4 and S12 plays an important role in translational accuracy. This Methanosphaera stadtmanae (strain ATCC 43021 / DSM 3091 / JCM 11832 / MCB-3) protein is Small ribosomal subunit protein uS5.